Consider the following 150-residue polypeptide: SKP1-like protein 17 (150 aa).

An interaction with the F-box domain of F-box proteins region spans residues 92–150 (LDAADYLIVIGLKNLIAQAIADYTADKTVNEIRELFNIENDYTPEEEEELRKKNEWAFN).

Belongs to the SKP1 family. As to quaternary structure, part of a SCF (SKP1-cullin-F-box) protein ligase complex. Interacts with CPR1/CPR30. Mainly detected in the siliques.

The protein localises to the nucleus. Its pathway is protein modification; protein ubiquitination. Involved in ubiquitination and subsequent proteasomal degradation of target proteins. Together with CUL1, RBX1 and a F-box protein, it forms a SCF E3 ubiquitin ligase complex. The functional specificity of this complex depends on the type of F-box protein. In the SCF complex, it serves as an adapter that links the F-box protein to CUL1. Probably implicated in incompatibility response after hybridization. The sequence is that of SKP1-like protein 17 (ASK17) from Arabidopsis thaliana (Mouse-ear cress).